Consider the following 204-residue polypeptide: CLAVATA3/ESR (CLE)-related protein 1 (204 aa).

The first 21 residues, 1–21, serve as a signal peptide directing secretion; it reads MAKNAMLCLLILSVVLALAFA. The tract at residues 21–83 is required for secretion from the host cytoplasm to the host apoplasm; sequence ATNEKDDKEA…SNQLQNAYRM (63 aa). N32 carries an N-linked (GlcNAc...) asparagine glycan. The interval 116–204 is disordered; that stretch reads RNTGMKPQSY…TPGVPDRQHR (89 aa). 3 stretches are compositionally biased toward basic and acidic residues: residues 139–151, 160–172, and 181–193; these read LHNREKILEEQKR and LHNREKTLEEQKR. Propeptides (removed in mature form) lie at residues 142–150, 163–171, and 184–192; these read REKILEEQK and REKTLEEQK.

This sequence belongs to the CLV3/ESR signal peptide family. Post-translationally, preprocessing of the precursor by host proteases leads first to the production of 21-mer CLE-containing peptides (Arg-130 to Lys-150, Arg-151 to Lys-171 and Arg-172 to Lys-192) followed by an ultimate C-term trimming to give the mature 12-mer CLE1-1 peptide. Highly expressed exclusively within the dorsal esophageal gland cell during syncytium formation in host plants.

It is found in the secreted. Its subcellular location is the host cytoplasm. The protein resides in the host extracellular space. The protein localises to the extracellular space. It localises to the apoplast. Functionally, mimics host plant CLE extracellular signal peptides that regulate cell fate. May play a role in the differentiation or division of feeding cells (syncytia) induced in plant roots during infection. The sequence is that of CLAVATA3/ESR (CLE)-related protein 1 from Globodera rostochiensis (Golden nematode worm).